Here is a 339-residue protein sequence, read N- to C-terminus: tRNA pseudouridine synthase D (339 aa).

The active-site Nucleophile is Asp80. One can recognise a TRUD domain in the interval 155 to 311 (GFPNYFTEQR…AKGFSWAFEL (157 aa)).

The protein belongs to the pseudouridine synthase TruD family.

The enzyme catalyses uridine(13) in tRNA = pseudouridine(13) in tRNA. Responsible for synthesis of pseudouridine from uracil-13 in transfer RNAs. The chain is tRNA pseudouridine synthase D from Haemophilus influenzae (strain PittEE).